A 492-amino-acid polypeptide reads, in one-letter code: MGKSETIAEGKDRYQAGVIPYKKMGYWEPDYQPKDTDIIAMFRITPQPGVDPEEAAAAVAGESSTATWTVVWTDRLTDCELYRAKAYRADLVPNTGEGTKNEAQYFAYIAYDLDLFEPGSIANLTASIIGNVFGFKAVKALRLEDMRIPVAYLKTFQGPATGVVVERERLDKFGRPLLGATTKPKLGLSGRNYGRVVYEALKGGLDFVKDDENINSQPFMHWRDRFLYCMEAVNKASAATGEVKGHYLNVTAATMEDMYERAEFAKSLGSVIIMIDLVVGYTAIQSMAKWARKNDMILHLHRAGNSTYSRQKNHGMNFRVICKWMRMAGVDHIHAGTVVGKLEGDPLMIKGFYDTLLDSHTPTSLEHGLFFDQDWASLNKVMPVASGGIHAGQMHQLIQYLGEDVILQFGGGTIGHPQGIQAGAVANRVALEAMILARNEGRDYVKEGPQILQDAAKWCSPLKAALDTWKDVTFNYESTDTADFVPTATASV.

Substrate is bound by residues asparagine 131 and threonine 181. Lysine 183 (proton acceptor) is an active-site residue. Lysine 185 lines the substrate pocket. Lysine 209, aspartate 211, and glutamate 212 together coordinate Mg(2+). N6-carboxylysine is present on lysine 209. Histidine 301 acts as the Proton acceptor in catalysis. Residues arginine 302, histidine 334, and serine 386 each coordinate substrate.

The protein belongs to the RuBisCO large chain family. Type I subfamily. In terms of assembly, heterohexadecamer of 8 large chains and 8 small chains. Mg(2+) serves as cofactor.

The catalysed reaction is 2 (2R)-3-phosphoglycerate + 2 H(+) = D-ribulose 1,5-bisphosphate + CO2 + H2O. It carries out the reaction D-ribulose 1,5-bisphosphate + O2 = 2-phosphoglycolate + (2R)-3-phosphoglycerate + 2 H(+). In terms of biological role, ruBisCO catalyzes two reactions: the carboxylation of D-ribulose 1,5-bisphosphate, the primary event in carbon dioxide fixation, as well as the oxidative fragmentation of the pentose substrate. Both reactions occur simultaneously and in competition at the same active site. This chain is Ribulose bisphosphate carboxylase large chain, found in Nitrosococcus oceani (strain ATCC 19707 / BCRC 17464 / JCM 30415 / NCIMB 11848 / C-107).